The sequence spans 488 residues: Gamma-aminobutyric acid receptor subunit beta-4 (488 aa).

An N-terminal signal peptide occupies residues 1-25 (MWTFQADRLSGIVSALAALCVACCA). At 26-244 (QSPSTGNISV…SFRIKRNIGY (219 aa)) the chain is on the extracellular side. N-linked (GlcNAc...) asparagine glycans are attached at residues Asn-32, Asn-104, Asn-173, and Asn-195. Residues Cys-160 and Cys-174 are joined by a disulfide bond. The next 3 helical transmembrane spans lie at 245-266 (FILQ…SFWI), 271-292 (SAAR…NTHL), and 304-326 (AIDV…YAFV). Residues 327–465 (NYIFFGRGPR…DLTDVSTIDK (139 aa)) are Cytoplasmic-facing. Residues 466 to 487 (WSRIIFPITFGFFNLVYWLYYV) traverse the membrane as a helical segment.

The protein belongs to the ligand-gated ion channel (TC 1.A.9) family. Gamma-aminobutyric acid receptor (TC 1.A.9.5) subfamily. GABRB4 sub-subfamily. Generally pentameric. There are five types of GABA(A) receptor chains: alpha, beta, gamma, delta, and rho.

Its subcellular location is the postsynaptic cell membrane. The protein localises to the cell membrane. In terms of biological role, GABA, the major inhibitory neurotransmitter in the vertebrate brain, mediates neuronal inhibition by binding to the GABA/benzodiazepine receptor and opening an integral chloride channel. This chain is Gamma-aminobutyric acid receptor subunit beta-4 (GABRB4), found in Gallus gallus (Chicken).